Consider the following 310-residue polypeptide: L-lactate dehydrogenase (310 aa).

NAD(+) is bound by residues 10-11 (MV), aspartate 32, tyrosine 62, and 76-77 (GV). Residues glutamine 79, arginine 85, and 117-120 (NPVD) each bind substrate. NAD(+)-binding positions include 115-117 (ATN) and serine 140. 145–148 (DTAR) serves as a coordination point for substrate. Residues arginine 150 and 162–167 (QSVHAY) each bind beta-D-fructose 1,6-bisphosphate. Histidine 172 (proton acceptor) is an active-site residue. Phosphotyrosine is present on tyrosine 218. Threonine 227 is a binding site for substrate.

Belongs to the LDH/MDH superfamily. LDH family. Homotetramer.

Its subcellular location is the cytoplasm. It carries out the reaction (S)-lactate + NAD(+) = pyruvate + NADH + H(+). Its pathway is fermentation; pyruvate fermentation to lactate; (S)-lactate from pyruvate: step 1/1. With respect to regulation, allosterically activated by fructose 1,6-bisphosphate (FBP). It binds two fructose 1,6-bisphosphate (FBP) molecules per tetramer. Its function is as follows. Catalyzes the conversion of lactate to pyruvate. This is L-lactate dehydrogenase from Thermus caldophilus.